Consider the following 367-residue polypeptide: UDP-N-acetylglucosamine--N-acetylmuramyl-(pentapeptide) pyrophosphoryl-undecaprenol N-acetylglucosamine transferase (367 aa).

Residues 21-23, N129, R170, S198, and Q295 contribute to the UDP-N-acetyl-alpha-D-glucosamine site; that span reads TGG.

Belongs to the glycosyltransferase 28 family. MurG subfamily.

The protein localises to the cell inner membrane. The catalysed reaction is di-trans,octa-cis-undecaprenyl diphospho-N-acetyl-alpha-D-muramoyl-L-alanyl-D-glutamyl-meso-2,6-diaminopimeloyl-D-alanyl-D-alanine + UDP-N-acetyl-alpha-D-glucosamine = di-trans,octa-cis-undecaprenyl diphospho-[N-acetyl-alpha-D-glucosaminyl-(1-&gt;4)]-N-acetyl-alpha-D-muramoyl-L-alanyl-D-glutamyl-meso-2,6-diaminopimeloyl-D-alanyl-D-alanine + UDP + H(+). It functions in the pathway cell wall biogenesis; peptidoglycan biosynthesis. Functionally, cell wall formation. Catalyzes the transfer of a GlcNAc subunit on undecaprenyl-pyrophosphoryl-MurNAc-pentapeptide (lipid intermediate I) to form undecaprenyl-pyrophosphoryl-MurNAc-(pentapeptide)GlcNAc (lipid intermediate II). This chain is UDP-N-acetylglucosamine--N-acetylmuramyl-(pentapeptide) pyrophosphoryl-undecaprenol N-acetylglucosamine transferase, found in Synechococcus sp. (strain JA-2-3B'a(2-13)) (Cyanobacteria bacterium Yellowstone B-Prime).